Consider the following 266-residue polypeptide: Undecaprenyl-diphosphatase (266 aa).

The next 8 membrane-spanning stretches (helical) occupy residues 1 to 21 (MDTF…FLPI), 39 to 59 (QGLA…VLYF), 83 to 103 (SKLA…GFAL), 111 to 131 (LRGP…LWWA), 144 to 164 (TGWK…IPGT), 183 to 203 (AAAR…AILM), 218 to 238 (SLAL…HLFL), and 246 to 266 (MTPF…FIFM).

Belongs to the UppP family.

The protein resides in the cell inner membrane. The catalysed reaction is di-trans,octa-cis-undecaprenyl diphosphate + H2O = di-trans,octa-cis-undecaprenyl phosphate + phosphate + H(+). In terms of biological role, catalyzes the dephosphorylation of undecaprenyl diphosphate (UPP). Confers resistance to bacitracin. The protein is Undecaprenyl-diphosphatase of Shewanella woodyi (strain ATCC 51908 / MS32).